The sequence spans 505 residues: Cysteine--tRNA ligase (505 aa).

C33 contacts Zn(2+). The 'HIGH' region motif lies at 35-45 (PTVYDFAHIGN). Zn(2+)-binding residues include C229, H268, and E272. The 'KMSKS' region signature appears at 301–305 (KMSKS). K304 lines the ATP pocket.

This sequence belongs to the class-I aminoacyl-tRNA synthetase family. In terms of assembly, monomer. Requires Zn(2+) as cofactor.

The protein resides in the cytoplasm. The catalysed reaction is tRNA(Cys) + L-cysteine + ATP = L-cysteinyl-tRNA(Cys) + AMP + diphosphate. The polypeptide is Cysteine--tRNA ligase (Brucella anthropi (strain ATCC 49188 / DSM 6882 / CCUG 24695 / JCM 21032 / LMG 3331 / NBRC 15819 / NCTC 12168 / Alc 37) (Ochrobactrum anthropi)).